The following is a 112-amino-acid chain: Ig kappa chain V-II region MOPC 167 (112 aa).

A framework-1 region spans residues 1–23; it reads DIVITQDELSNPVTSGESVSISC. Cys23 and Cys93 form a disulfide bridge. Residues 24–39 form a complementarity-determining-1 region; that stretch reads RSSKSLLYKDGKTYLN. The segment at 40–54 is framework-2; it reads WFLQRPGQSPQLLIS. The interval 55-61 is complementarity-determining-2; it reads LMSTRAS. The segment at 62 to 93 is framework-3; that stretch reads GVSDRFSGSGSRTDFTLEISRVKAEDVGVYYC. A complementarity-determining-3 region spans residues 94–102; the sequence is QQLVEYPLT. The framework-4 stretch occupies residues 103–112; sequence FGAGTKLELK.

This Mus musculus (Mouse) protein is Ig kappa chain V-II region MOPC 167.